We begin with the raw amino-acid sequence, 325 residues long: Tetraacyldisaccharide 4'-kinase (325 aa).

58–65 (TVGGSGKT) provides a ligand contact to ATP.

It belongs to the LpxK family.

It carries out the reaction a lipid A disaccharide + ATP = a lipid IVA + ADP + H(+). Its pathway is glycolipid biosynthesis; lipid IV(A) biosynthesis; lipid IV(A) from (3R)-3-hydroxytetradecanoyl-[acyl-carrier-protein] and UDP-N-acetyl-alpha-D-glucosamine: step 6/6. Functionally, transfers the gamma-phosphate of ATP to the 4'-position of a tetraacyldisaccharide 1-phosphate intermediate (termed DS-1-P) to form tetraacyldisaccharide 1,4'-bis-phosphate (lipid IVA). This Coxiella burnetii (strain CbuK_Q154) (Coxiella burnetii (strain Q154)) protein is Tetraacyldisaccharide 4'-kinase.